The primary structure comprises 1199 residues: DNA-directed RNA polymerase subunit beta' (1199 aa).

Residues C60, C62, C75, and C78 each coordinate Zn(2+). The Mg(2+) site is built by D449, D451, and D453. Positions 818, 892, 899, and 902 each coordinate Zn(2+).

The protein belongs to the RNA polymerase beta' chain family. The RNAP catalytic core consists of 2 alpha, 1 beta, 1 beta' and 1 omega subunit. When a sigma factor is associated with the core the holoenzyme is formed, which can initiate transcription. Mg(2+) serves as cofactor. It depends on Zn(2+) as a cofactor.

The enzyme catalyses RNA(n) + a ribonucleoside 5'-triphosphate = RNA(n+1) + diphosphate. DNA-dependent RNA polymerase catalyzes the transcription of DNA into RNA using the four ribonucleoside triphosphates as substrates. The polypeptide is DNA-directed RNA polymerase subunit beta' (Bacillus licheniformis (strain ATCC 14580 / DSM 13 / JCM 2505 / CCUG 7422 / NBRC 12200 / NCIMB 9375 / NCTC 10341 / NRRL NRS-1264 / Gibson 46)).